The sequence spans 485 residues: N-succinylglutamate 5-semialdehyde dehydrogenase (485 aa).

220–225 lines the NAD(+) pocket; that stretch reads GSANTG. Catalysis depends on residues Glu243 and Cys278.

It belongs to the aldehyde dehydrogenase family. AstD subfamily.

The catalysed reaction is N-succinyl-L-glutamate 5-semialdehyde + NAD(+) + H2O = N-succinyl-L-glutamate + NADH + 2 H(+). The protein operates within amino-acid degradation; L-arginine degradation via AST pathway; L-glutamate and succinate from L-arginine: step 4/5. Its function is as follows. Catalyzes the NAD-dependent reduction of succinylglutamate semialdehyde into succinylglutamate. In Vibrio atlanticus (strain LGP32) (Vibrio splendidus (strain Mel32)), this protein is N-succinylglutamate 5-semialdehyde dehydrogenase.